Here is a 200-residue protein sequence, read N- to C-terminus: Probable molybdenum cofactor guanylyltransferase (200 aa).

GTP-binding positions include 9–11 (LAG), Lys-21, Asp-69, and Asp-100. Residue Asp-100 coordinates Mg(2+).

It belongs to the MobA family. It depends on Mg(2+) as a cofactor.

It is found in the cytoplasm. The enzyme catalyses Mo-molybdopterin + GTP + H(+) = Mo-molybdopterin guanine dinucleotide + diphosphate. Its function is as follows. Transfers a GMP moiety from GTP to Mo-molybdopterin (Mo-MPT) cofactor (Moco or molybdenum cofactor) to form Mo-molybdopterin guanine dinucleotide (Mo-MGD) cofactor. This Bacillus anthracis (strain CDC 684 / NRRL 3495) protein is Probable molybdenum cofactor guanylyltransferase.